A 308-amino-acid chain; its full sequence is tRNA dimethylallyltransferase 1 (308 aa).

An ATP-binding site is contributed by 9–16 (GPTGVGKT). Residue 11 to 16 (TGVGKT) participates in substrate binding. The interval 34–37 (DSRQ) is interaction with substrate tRNA.

This sequence belongs to the IPP transferase family. In terms of assembly, monomer. Mg(2+) serves as cofactor.

It catalyses the reaction adenosine(37) in tRNA + dimethylallyl diphosphate = N(6)-dimethylallyladenosine(37) in tRNA + diphosphate. Catalyzes the transfer of a dimethylallyl group onto the adenine at position 37 in tRNAs that read codons beginning with uridine, leading to the formation of N6-(dimethylallyl)adenosine (i(6)A). The chain is tRNA dimethylallyltransferase 1 from Bacteroides thetaiotaomicron (strain ATCC 29148 / DSM 2079 / JCM 5827 / CCUG 10774 / NCTC 10582 / VPI-5482 / E50).